The sequence spans 864 residues: Leucine--tRNA ligase (864 aa).

Positions 42-52 match the 'HIGH' region motif; it reads PYPSGKLHMGH. The 'KMSKS' region motif lies at 624–628; that stretch reads KMSKS. Lys-627 lines the ATP pocket.

Belongs to the class-I aminoacyl-tRNA synthetase family.

It localises to the cytoplasm. The enzyme catalyses tRNA(Leu) + L-leucine + ATP = L-leucyl-tRNA(Leu) + AMP + diphosphate. The polypeptide is Leucine--tRNA ligase (Paraburkholderia phymatum (strain DSM 17167 / CIP 108236 / LMG 21445 / STM815) (Burkholderia phymatum)).